A 327-amino-acid polypeptide reads, in one-letter code: E3 ubiquitin-protein ligase SINAT4 (327 aa).

The tract at residues 1-27 is disordered; the sequence is METDSMECVSSTGNEIHQNGNGHQSYQ. Positions 8–27 are enriched in polar residues; sequence CVSSTGNEIHQNGNGHQSYQ. The RING-type zinc finger occupies 64 to 100; that stretch reads CPVCTYSMYPPIHQCHNGHTLCSTCKVRVHNRCPTCR. An SBD region spans residues 114–307; the sequence is VAESLELPCK…KELKLRVTGK (194 aa). An SIAH-type zinc finger spans residues 117-177; the sequence is SLELPCKFYN…LVAHLRDDHK (61 aa). Zn(2+) is bound by residues Cys122, Cys129, His141, Cys145, Cys152, Cys159, His171, and His176.

It belongs to the SINA (Seven in absentia) family. As to quaternary structure, interacts with SINAT6. Interacts with WAV3. Interacts with FREE1. Interacts with ELC/VPS23A.

It is found in the endosome. It localises to the multivesicular body. Its subcellular location is the cytoplasmic vesicle. The protein localises to the autophagosome. It carries out the reaction S-ubiquitinyl-[E2 ubiquitin-conjugating enzyme]-L-cysteine + [acceptor protein]-L-lysine = [E2 ubiquitin-conjugating enzyme]-L-cysteine + N(6)-ubiquitinyl-[acceptor protein]-L-lysine.. It participates in protein modification; protein ubiquitination. In terms of biological role, E3 ubiquitin-protein ligase that mediates ubiquitination and subsequent proteasomal degradation of target proteins. E3 ubiquitin ligases accept ubiquitin from an E2 ubiquitin-conjugating enzyme in the form of a thioester and then directly transfers the ubiquitin to targeted substrates. It probably triggers the ubiquitin-mediated degradation of different substrates. Modulates directly the ubiquitination and proteasomal-dependent degradation of FREE1, a component of the ESCRT-I complex. Modulates directly the ubiquitination and proteasomal-dependent degradation of ELC/VPS23A, a component of the ESCRT-I complex. The chain is E3 ubiquitin-protein ligase SINAT4 from Arabidopsis thaliana (Mouse-ear cress).